The sequence spans 143 residues: MAPKKKVSALIKLQIQAGKANPAPPLGPALGSHGVNIMDFCKAYNAQTQDKMGQVIPVEITVYEDRSFTFVLKTPPAAALLKKAAGIEKGTENPLTHKVGSVTKAQVREIAETKMEDLSARDIEAGMKIIEGTARSMGITVTD.

The protein belongs to the universal ribosomal protein uL11 family. Part of the ribosomal stalk of the 50S ribosomal subunit. Interacts with L10 and the large rRNA to form the base of the stalk. L10 forms an elongated spine to which L12 dimers bind in a sequential fashion forming a multimeric L10(L12)X complex. In terms of processing, one or more lysine residues are methylated.

Forms part of the ribosomal stalk which helps the ribosome interact with GTP-bound translation factors. The chain is Large ribosomal subunit protein uL11 from Bifidobacterium longum subsp. infantis (strain ATCC 15697 / DSM 20088 / JCM 1222 / NCTC 11817 / S12).